A 345-amino-acid polypeptide reads, in one-letter code: uncharacterized protein (345 aa).

3 Solcar repeats span residues 80-153, 162-246, and 256-339; these read MSFF…MKSR, SDPQ…LKLK, and NLAH…ILNF. 6 consecutive transmembrane segments (helical) span residues 83 to 103, 128 to 148, 220 to 240, 262 to 282, 296 to 316, and 319 to 339; these read FEALGAGICAGLAVDLSLFPI, GLGSILVGSAPGASLFFTTYE, AGYGITIAREIPFTLIQFPIW, AISGSIAGGIAAALTTPFDVV, VFTIKSIVAHEGFLALYKGIV, and VLWLSGGGAIFLGCYDVILNF.

Belongs to the mitochondrial carrier (TC 2.A.29) family.

Its subcellular location is the mitochondrion inner membrane. This is an uncharacterized protein from Schizosaccharomyces pombe (strain 972 / ATCC 24843) (Fission yeast).